The primary structure comprises 218 residues: Riboflavin synthase (218 aa).

Lumazine-binding repeat units follow at residues 1 to 97 (MFTG…LGGH) and 98 to 194 (LVSG…EKLI). Residues 4–6 (GII), 48–50 (CLT), 62–67 (DLSLET), 101–103 (GHV), K136, 145–147 (SLT), and 159–164 (TIVPHT) contribute to the 2,4-dihydroxypteridine site.

Homotrimer.

It catalyses the reaction 2 6,7-dimethyl-8-(1-D-ribityl)lumazine + H(+) = 5-amino-6-(D-ribitylamino)uracil + riboflavin. It functions in the pathway cofactor biosynthesis; riboflavin biosynthesis; riboflavin from 2-hydroxy-3-oxobutyl phosphate and 5-amino-6-(D-ribitylamino)uracil: step 2/2. In terms of biological role, catalyzes the dismutation of two molecules of 6,7-dimethyl-8-ribityllumazine, resulting in the formation of riboflavin and 5-amino-6-(D-ribitylamino)uracil. The polypeptide is Riboflavin synthase (ribE) (Photobacterium leiognathi).